Reading from the N-terminus, the 288-residue chain is UPF0761 membrane protein HS_0693 (288 aa).

6 helical membrane passes run 36–56 (TLALVPLIMVFFSVFAAFPVF), 92–112 (QMSAVGIISLIVVALMLIHSI), 127–147 (PAIFSFAIYWLILTLGPIVIA), 176–196 (LLSLMPFFLTWFIFTVLYMVV), 200–220 (KVSIIHSAAGALIAAVFFTLG), and 240–260 (AMATLPIMLLWIQLSWTAVLL).

Belongs to the UPF0761 family.

Its subcellular location is the cell inner membrane. This Histophilus somni (strain 129Pt) (Haemophilus somnus) protein is UPF0761 membrane protein HS_0693.